Consider the following 348-residue polypeptide: Thioredoxin-related protein DsbJ (348 aa).

The N-terminal stretch at 1 to 32 is a signal peptide; the sequence is MILLQNIKRCSLKQLKVLATLLLSLSLPTLEA.

It is found in the periplasm. The sequence is that of Thioredoxin-related protein DsbJ (dsbJ) from Chlamydia pneumoniae (Chlamydophila pneumoniae).